The chain runs to 75 residues: Translation initiation factor IF-1 1 (75 aa).

Positions 1-74 constitute an S1-like domain; the sequence is MARSDMIEVD…TRGRIVYRYR (74 aa).

The protein belongs to the IF-1 family. In terms of assembly, component of the 30S ribosomal translation pre-initiation complex which assembles on the 30S ribosome in the order IF-2 and IF-3, IF-1 and N-formylmethionyl-tRNA(fMet); mRNA recruitment can occur at any time during PIC assembly.

Its subcellular location is the cytoplasm. In terms of biological role, one of the essential components for the initiation of protein synthesis. Stabilizes the binding of IF-2 and IF-3 on the 30S subunit to which N-formylmethionyl-tRNA(fMet) subsequently binds. Helps modulate mRNA selection, yielding the 30S pre-initiation complex (PIC). Upon addition of the 50S ribosomal subunit IF-1, IF-2 and IF-3 are released leaving the mature 70S translation initiation complex. The sequence is that of Translation initiation factor IF-1 1 from Symbiobacterium thermophilum (strain DSM 24528 / JCM 14929 / IAM 14863 / T).